Consider the following 102-residue polypeptide: Synaptobrevin-like protein 5 (102 aa).

Residues 17–77 enclose the v-SNARE coiled-coil homology domain; the sequence is KIMRTRRELD…VKIKREMSWK (61 aa).

The chain is Synaptobrevin-like protein 5 (snb-5) from Caenorhabditis elegans.